A 220-amino-acid chain; its full sequence is MSDRGGIFAGDDPFAIARSWLAEAERTEPNDANAMALATVDADGLPDARMVLLKDIEGGAADGSFVFYTNYESAKGVEIEATGVAAFVMHWKSLRRQIRVRGHVTRVEPELADAYYASRPLQSRIGAWASRQSRPLASRGALMAEVARLGISLGLNPSRPPHWGGYRIHPVQIEFWADGAFRLHDRFRWTKSSYQGENSALRDEGQEVPQSLWQVCRLSP.

FMN is bound by residues 49–54 (RMVLLK), 68–69 (YT), lysine 75, and glutamine 97. Residue lysine 54 coordinates substrate. Substrate contacts are provided by tyrosine 115, arginine 119, and serine 123. FMN is bound by residues 132-133 (QS) and tryptophan 176. Position 182–184 (182–184 (RLH)) interacts with substrate. Arginine 186 is an FMN binding site.

This sequence belongs to the pyridoxamine 5'-phosphate oxidase family. Homodimer. FMN is required as a cofactor.

The enzyme catalyses pyridoxamine 5'-phosphate + O2 + H2O = pyridoxal 5'-phosphate + H2O2 + NH4(+). It catalyses the reaction pyridoxine 5'-phosphate + O2 = pyridoxal 5'-phosphate + H2O2. Its pathway is cofactor metabolism; pyridoxal 5'-phosphate salvage; pyridoxal 5'-phosphate from pyridoxamine 5'-phosphate: step 1/1. It functions in the pathway cofactor metabolism; pyridoxal 5'-phosphate salvage; pyridoxal 5'-phosphate from pyridoxine 5'-phosphate: step 1/1. Functionally, catalyzes the oxidation of either pyridoxine 5'-phosphate (PNP) or pyridoxamine 5'-phosphate (PMP) into pyridoxal 5'-phosphate (PLP). This is Pyridoxine/pyridoxamine 5'-phosphate oxidase from Paracoccus denitrificans (strain Pd 1222).